The following is a 272-amino-acid chain: MNSIVSKYTQSTNNDDPKKIIEEEGFTNRFDVVPVPQSSLYLRNLTDETKNKHCLIKMNHGTTTLAFRYQHGIVVCVDSRASAGPLIASQTVKKVIEINPYLLGTLAGGAADCQFWETVLGMECRLHQLRNKELISVSAASKILSNITYSYKGYGLSMGTMLAGTGKGGTALYYIDSDGTRLKGDLFSVGSGSTFAYGVLDSGYRWDLSKQEALYLAQRSIVAATHRDAYSGGSVNLYHIDENGWVFHGNFDVDSLIWEAKDNENSFAHIPR.

Positions 1–61 (MNSIVSKYTQ…KHCLIKMNHG (61 aa)) are cleaved as a propeptide — removed in mature form. Thr62 acts as the Nucleophile in catalysis.

The protein belongs to the peptidase T1B family. In terms of assembly, the 26S proteasome consists of a 20S proteasome core and two 19S regulatory subunits. The 20S proteasome core is composed of 28 subunits that are arranged in four stacked rings, resulting in a barrel-shaped structure. The two end rings are each formed by seven alpha subunits, and the two central rings are each formed by seven beta subunits. The catalytic chamber with the active sites is on the inside of the barrel.

It localises to the cytoplasm. The protein localises to the nucleus. The catalysed reaction is Cleavage of peptide bonds with very broad specificity.. Functionally, the proteasome is a multicatalytic proteinase complex which is characterized by its ability to cleave peptides with Arg, Phe, Tyr, Leu, and Glu adjacent to the leaving group at neutral or slightly basic pH. The proteasome has an ATP-dependent proteolytic activity. This is Probable proteasome subunit beta type-5 (pts1) from Schizosaccharomyces pombe (strain 972 / ATCC 24843) (Fission yeast).